The chain runs to 911 residues: Valine--tRNA ligase (911 aa).

The 'HIGH' region signature appears at 57–67 (PTVSGSLHVGH). The 'KMSKS' region signature appears at 599-603 (KMSKS). ATP is bound at residue Lys602. Residues 882 to 911 (EESAAEGTPETEVAVEASELGEPPAKKPKH) are disordered.

The protein belongs to the class-I aminoacyl-tRNA synthetase family. ValS type 2 subfamily. In terms of assembly, monomer.

It localises to the cytoplasm. It carries out the reaction tRNA(Val) + L-valine + ATP = L-valyl-tRNA(Val) + AMP + diphosphate. Catalyzes the attachment of valine to tRNA(Val). As ValRS can inadvertently accommodate and process structurally similar amino acids such as threonine, to avoid such errors, it has a 'posttransfer' editing activity that hydrolyzes mischarged Thr-tRNA(Val) in a tRNA-dependent manner. In Bifidobacterium longum (strain NCC 2705), this protein is Valine--tRNA ligase.